We begin with the raw amino-acid sequence, 72 residues long: Translation initiation factor IF-1 (72 aa).

In terms of domain architecture, S1-like spans 1–72 (MAKQDVIELE…TRGRITYRYK (72 aa)).

It belongs to the IF-1 family. In terms of assembly, component of the 30S ribosomal translation pre-initiation complex which assembles on the 30S ribosome in the order IF-2 and IF-3, IF-1 and N-formylmethionyl-tRNA(fMet); mRNA recruitment can occur at any time during PIC assembly.

Its subcellular location is the cytoplasm. In terms of biological role, one of the essential components for the initiation of protein synthesis. Stabilizes the binding of IF-2 and IF-3 on the 30S subunit to which N-formylmethionyl-tRNA(fMet) subsequently binds. Helps modulate mRNA selection, yielding the 30S pre-initiation complex (PIC). Upon addition of the 50S ribosomal subunit IF-1, IF-2 and IF-3 are released leaving the mature 70S translation initiation complex. In Staphylococcus aureus (strain USA300 / TCH1516), this protein is Translation initiation factor IF-1.